The chain runs to 349 residues: tRNA pseudouridine synthase D (349 aa).

Phe-27 serves as a coordination point for substrate. Asp-80 acts as the Nucleophile in catalysis. Substrate is bound at residue Asn-129. The region spanning Gly-155–Leu-303 is the TRUD domain. A substrate-binding site is contributed by Phe-329.

This sequence belongs to the pseudouridine synthase TruD family.

It catalyses the reaction uridine(13) in tRNA = pseudouridine(13) in tRNA. Responsible for synthesis of pseudouridine from uracil-13 in transfer RNAs. The chain is tRNA pseudouridine synthase D from Shigella flexneri.